The sequence spans 570 residues: MAFGARGWRRWSLLLLLLWVTGQAAPVLGLAVSSELQIQRSFVPDECPRTVRSGDFVRYHYVGTFLDGQKFDSSYDRDSTFSVFVGKGQLIAGMDQALVGMCVNERRFVTIPPNLAYGSEGVSGVIPPNSVLHFDVLLVDIWNSEDQVQIQTYFKPPSCPRTIQVSDFVRYHYNGTFLDGTLFDSSHNRMKTYDTYVGIGWLIPGMDKGLLGMCVGEKRIITIPPFLAYGEEGDGKDIPGQASLVFDVALLDLHNPKDTISVENKVVPESCERRSQSGDFLRYHYNGTLLDGTLFDSSYSRNHTFDTYIGQGYVIPGMDEGLLGVCIGERRRIVVPPHLGYGEEGRGSIPGSAVLVFDIHVIDFHNPSDSISITSHYKPPDCSVLSKKGDYLKYHYNASLLDGTLLDSTWNLGKTYNIVLGFGQVVLGMDMGLREMCVGEKRTVIIPPHLGYGEAGVDGEVPGSAVLVFDIELLELVSGLPEGYMFIWNGEVSPNLFEEIDKDGNGEVLLEEFSEYIHAQVASGKGKLAPGFNAEMIVKNMFTNQDRNGDGKVTAEEFKLKDQETKHDEL.

An N-terminal signal peptide occupies residues 1-24 (MAFGARGWRRWSLLLLLLWVTGQA). 4 consecutive PPIase FKBP-type domains span residues 54-142 (GDFV…VDIW), 166-254 (SDFV…LDLH), 278-365 (GDFL…IDFH), and 389-477 (GDYL…LELV). N-linked (GlcNAc...) asparagine glycosylation is found at Asn-174, Asn-286, Asn-302, and Asn-397. EF-hand domains are found at residues 488-523 (WNGE…QVAS) and 533-568 (NAEM…TKHD). Asp-501, Asp-503, Asn-505, Glu-507, Glu-512, Asp-546, Asn-548, Asp-550, Lys-552, and Glu-557 together coordinate Ca(2+). Positions 567–570 (HDEL) match the Prevents secretion from ER motif.

In terms of processing, phosphorylated.

The protein localises to the endoplasmic reticulum lumen. It catalyses the reaction [protein]-peptidylproline (omega=180) = [protein]-peptidylproline (omega=0). Its activity is regulated as follows. Inhibited by FK506. PPIases accelerate the folding of proteins during protein synthesis. In Rattus norvegicus (Rat), this protein is Peptidyl-prolyl cis-trans isomerase FKBP9 (Fkbp9).